We begin with the raw amino-acid sequence, 650 residues long: SPARC-like protein 1 (650 aa).

The signal sequence occupies residues 1–16; sequence MKAVLLLLCALGTAVA. The disordered stretch occupies residues 51 to 352; the sequence is TADIENHPSD…HGAGDDYFIP (302 aa). The span at 54–64 shows a compositional bias: basic and acidic residues; the sequence is IENHPSDKAEK. A phosphoserine mark is found at S70, S78, and S86. Basic and acidic residues predominate over residues 75–85; that stretch reads HEQSTEQDKTY. Acidic residues predominate over residues 91-101; sequence LKDEEDGDGDL. Polar residues-rich tracts occupy residues 116–126 and 135–148; these read EGTSEPQQKSL and TVST…QRAN. An N-linked (GlcNAc...) asparagine glycan is attached at N148. Phosphoserine occurs at positions 155 and 163. Positions 157–174 are enriched in polar residues; sequence EQPVSDSHQQPNESSKQT. N168 carries an N-linked (GlcNAc...) asparagine glycan. Acidic residues predominate over residues 189-210; the sequence is IPNEEEEEEEDEEEEEEEEPED. S272 carries the phosphoserine modification. Residues 277–299 show a composition bias toward basic and acidic residues; it reads EDKAAGSKEHIPHTEQQDQEGKA. A Phosphoserine modification is found at S353. Residues 375–415 are disordered; that stretch reads EETTTGESENRREAADNQEAKKAESSPNAEPSDEGNSREHS. The span at 382–398 shows a compositional bias: basic and acidic residues; that stretch reads SENRREAADNQEAKKAE. The residue at position 406 (S406) is a Phosphoserine. In terms of domain architecture, Follistatin-like spans 418–440; sequence SCTNFQCKRGHICKTDPQGKPHC. Disulfide bonds link C419–C430, C424–C440, C442–C476, C448–C469, C458–C495, C501–C612, and C620–C636. The Kazal-like domain occupies 436–497; that stretch reads GKPHCVCQDP…QLDYFGACKS (62 aa). N462 carries N-linked (GlcNAc...) asparagine glycosylation. Residues 608–643 form the EF-hand domain; it reads PMEHCITRFFEECDPNKDKHITLKEWGHCFGIKEED. Ca(2+) contacts are provided by D621, N623, D625, H627, and E632.

The protein belongs to the SPARC family. In terms of tissue distribution, highest expression in brain. Moderate levels in heart, adrenal gland, epididymis and lung. Low levels in kidney, eye, liver, spleen, submandibular gland and testis.

Its subcellular location is the secreted. The protein localises to the extracellular space. The protein resides in the extracellular matrix. The polypeptide is SPARC-like protein 1 (Sparcl1) (Mus musculus (Mouse)).